Reading from the N-terminus, the 307-residue chain is Zinc-alpha-2-glycoprotein (307 aa).

The first 17 residues, 1-17 (MVPVLLSLPLLLGPAVF), serve as a signal peptide directing secretion. Glutamine 18 is modified (pyrrolidone carboxylic acid). The cysteines at positions 118 and 181 are disulfide-linked. Residues asparagine 123, asparagine 190, and asparagine 254 are each glycosylated (N-linked (GlcNAc...) asparagine). The Ig-like C1-type domain maps to 202 to 287 (PTVTITSRVI…DHRGFSQSLS (86 aa)). Cysteine 220 and cysteine 275 are disulfide-bonded.

This sequence belongs to the MHC class I family. As to quaternary structure, interacts with PIP.

It is found in the secreted. In terms of biological role, stimulates lipid degradation in adipocytes and causes the extensive fat losses associated with some advanced cancers. The polypeptide is Zinc-alpha-2-glycoprotein (Azgp1) (Mus musculus (Mouse)).